A 219-amino-acid polypeptide reads, in one-letter code: 7-cyano-7-deazaguanine synthase (219 aa).

10–20 (FSGGQDSTTCL) contacts ATP. Zn(2+) contacts are provided by C188, C197, C200, and C203.

This sequence belongs to the QueC family. Zn(2+) serves as cofactor.

The catalysed reaction is 7-carboxy-7-deazaguanine + NH4(+) + ATP = 7-cyano-7-deazaguanine + ADP + phosphate + H2O + H(+). It participates in purine metabolism; 7-cyano-7-deazaguanine biosynthesis. Functionally, catalyzes the ATP-dependent conversion of 7-carboxy-7-deazaguanine (CDG) to 7-cyano-7-deazaguanine (preQ(0)). The polypeptide is 7-cyano-7-deazaguanine synthase (Bacteroides fragilis (strain ATCC 25285 / DSM 2151 / CCUG 4856 / JCM 11019 / LMG 10263 / NCTC 9343 / Onslow / VPI 2553 / EN-2)).